We begin with the raw amino-acid sequence, 578 residues long: Thrombomodulin (578 aa).

The first 16 residues, 1–16, serve as a signal peptide directing secretion; the sequence is MLRVLLLGVLAPAGLG. At 17-518 the chain is on the extracellular side; it reads LPTPAQPQPR…SPSPVGPVHS (502 aa). One can recognise a C-type lectin domain in the interval 31–167; it reads MEHDCFQLFR…CAAEADGFLC (137 aa). The N-linked (GlcNAc...) asparagine glycan is linked to Asn-114. 19 disulfide bridges follow: Cys-137–Cys-158, Cys-246–Cys-257, Cys-253–Cys-266, Cys-268–Cys-281, Cys-289–Cys-297, Cys-293–Cys-309, Cys-311–Cys-324, Cys-330–Cys-341, Cys-337–Cys-350, Cys-352–Cys-363, Cys-370–Cys-379, Cys-375–Cys-389, Cys-391–Cys-405, Cys-409–Cys-414, Cys-418–Cys-426, Cys-428–Cys-440, Cys-446–Cys-455, Cys-451–Cys-464, and Cys-466–Cys-480. EGF-like domains follow at residues 242–282 and 285–325; these read GAWD…RSCA and AEHS…HRCE. Asn-300 carries N-linked (GlcNAc...) asparagine glycosylation. The 39-residue stretch at 326-364 folds into the EGF-like 3; calcium-binding domain; sequence DVDDCIQVPSLCPQLCVNTRGAFECHCYPGYELVDNECV. A (3R)-3-hydroxyasparagine modification is found at Asn-343. 2 consecutive EGF-like domains span residues 366-406 and 405-441; these read PVDP…HRCQ and CQMF…FMCT. N-linked (GlcNAc...) asparagine glycosylation is present at Asn-410. Residues 442-481 enclose the EGF-like 6; calcium-binding domain; that stretch reads DIDECENGECPEACRNLPGTYECICGPDSPLAGQVATDCG. Residues 483-512 are disordered; it reads IISDPDGDSDSGSGEPPVTPTPGVTPSPSP. 2 O-linked (Xyl...) (chondroitin sulfate) serine glycosylation sites follow: Ser-493 and Ser-495. The segment covering 499 to 512 has biased composition (pro residues); the sequence is PVTPTPGVTPSPSP. A helical membrane pass occupies residues 519–539; it reads GVLIGISIASLSLVVALLALL. Residues 540-578 are Cytoplasmic-facing; the sequence is CHLRKKQGAPRAELEYKCGAPAKEVVLQHVRTEQMPQKL.

As to quaternary structure, interacts with ITGAL, ITGAM and ITGB2. Interacts with thrombin/F2; this interaction switches the specificity of thrombin from a procoagulant to an anticoagulant and antifibrinolytic protease. Interacts with ANGP1 and ANGP2; these interactions significantly inhibit the generation of activated PC and TAFIa/CPB2 by the thrombin/thrombomodulin complex. Interacts with PF4; this interaction enhances generation of activated protein C. Interacts with HMGB1; this interaction inhibits HMGB1 inflammatory activity. Post-translationally, N-glycosylated. In terms of processing, the iron and 2-oxoglutarate dependent 3-hydroxylation of aspartate and asparagine is (R) stereospecific within EGF domains. Expressed in lung, liver, spleen, kidney, pancreas and lymph node. Low expression in heart, cerebrum, urinary bladder and uterus.

The protein resides in the membrane. Its function is as follows. Endothelial cell receptor that plays a critical role in regulating several physiological processes including hemostasis, coagulation, fibrinolysis, inflammation, and angiogenesis. Acts as a cofactor for thrombin activation of protein C/PROC on the surface of vascular endothelial cells leading to initiation of the activated protein C anticoagulant pathway. Also accelerates the activation of the plasma carboxypeptidase B2/CPB2, which catalyzes removal of C-terminal basic amino acids from its substrates including kinins or anaphylatoxins leading to fibrinolysis inhibition. Plays critical protective roles in changing the cleavage specificity of protease-activated receptor 1/PAR1, inhibiting endothelial cell permeability and inflammation. Suppresses inflammation distinctly from its anticoagulant cofactor activity by sequestering HMGB1 thereby preventing it from engaging cellular receptors such as RAGE and contributing to the inflammatory response. The chain is Thrombomodulin (THBD) from Canis lupus familiaris (Dog).